The chain runs to 127 residues: Small ribosomal subunit protein uS11 (127 aa).

Belongs to the universal ribosomal protein uS11 family. As to quaternary structure, part of the 30S ribosomal subunit. Interacts with proteins S7 and S18. Binds to IF-3.

Located on the platform of the 30S subunit, it bridges several disparate RNA helices of the 16S rRNA. Forms part of the Shine-Dalgarno cleft in the 70S ribosome. In Pelodictyon phaeoclathratiforme (strain DSM 5477 / BU-1), this protein is Small ribosomal subunit protein uS11.